A 265-amino-acid polypeptide reads, in one-letter code: 4-hydroxy-tetrahydrodipicolinate reductase (265 aa).

Residues 7–12 and Asp33 each bind NAD(+); that span reads GASGRM. Arg34 contacts NADP(+). NAD(+)-binding positions include 96-98 and 120-123; these read GTT and AANM. The Proton donor/acceptor role is filled by His153. His154 is a binding site for (S)-2,3,4,5-tetrahydrodipicolinate. Catalysis depends on Lys157, which acts as the Proton donor. Residue 163–164 participates in (S)-2,3,4,5-tetrahydrodipicolinate binding; sequence GT.

Belongs to the DapB family.

It localises to the cytoplasm. The enzyme catalyses (S)-2,3,4,5-tetrahydrodipicolinate + NAD(+) + H2O = (2S,4S)-4-hydroxy-2,3,4,5-tetrahydrodipicolinate + NADH + H(+). The catalysed reaction is (S)-2,3,4,5-tetrahydrodipicolinate + NADP(+) + H2O = (2S,4S)-4-hydroxy-2,3,4,5-tetrahydrodipicolinate + NADPH + H(+). It participates in amino-acid biosynthesis; L-lysine biosynthesis via DAP pathway; (S)-tetrahydrodipicolinate from L-aspartate: step 4/4. Catalyzes the conversion of 4-hydroxy-tetrahydrodipicolinate (HTPA) to tetrahydrodipicolinate. This chain is 4-hydroxy-tetrahydrodipicolinate reductase, found in Burkholderia ambifaria (strain MC40-6).